The chain runs to 151 residues: Ribosome maturation factor RimP (151 aa).

Belongs to the RimP family.

It is found in the cytoplasm. In terms of biological role, required for maturation of 30S ribosomal subunits. This chain is Ribosome maturation factor RimP, found in Shewanella sediminis (strain HAW-EB3).